The chain runs to 597 residues: Elongation factor 4 (597 aa).

Residues Gln2–Glu184 enclose the tr-type G domain. GTP is bound by residues Asp14 to Thr19 and Asn131 to Asp134.

This sequence belongs to the TRAFAC class translation factor GTPase superfamily. Classic translation factor GTPase family. LepA subfamily.

The protein resides in the cell inner membrane. It catalyses the reaction GTP + H2O = GDP + phosphate + H(+). In terms of biological role, required for accurate and efficient protein synthesis under certain stress conditions. May act as a fidelity factor of the translation reaction, by catalyzing a one-codon backward translocation of tRNAs on improperly translocated ribosomes. Back-translocation proceeds from a post-translocation (POST) complex to a pre-translocation (PRE) complex, thus giving elongation factor G a second chance to translocate the tRNAs correctly. Binds to ribosomes in a GTP-dependent manner. The chain is Elongation factor 4 from Bordetella avium (strain 197N).